The sequence spans 127 residues: MPTINQLVRKERKKVIVKSKSPALKECPQRRGVCTRVYTTTPKKPNSALRKVAKVRLTSGFEVISYIGGEGHNLQEHSIVLVRGGRVKDLPGVKYHIVRGALDTAGVAKRTVSRSKYGAKRPKDAKK.

3-methylthioaspartic acid is present on Asp-89.

The protein belongs to the universal ribosomal protein uS12 family. In terms of assembly, part of the 30S ribosomal subunit. Contacts proteins S8 and S17. May interact with IF1 in the 30S initiation complex.

Its function is as follows. With S4 and S5 plays an important role in translational accuracy. Interacts with and stabilizes bases of the 16S rRNA that are involved in tRNA selection in the A site and with the mRNA backbone. Located at the interface of the 30S and 50S subunits, it traverses the body of the 30S subunit contacting proteins on the other side and probably holding the rRNA structure together. The combined cluster of proteins S8, S12 and S17 appears to hold together the shoulder and platform of the 30S subunit. The chain is Small ribosomal subunit protein uS12 from Campylobacter fetus subsp. fetus (strain 82-40).